Consider the following 254-residue polypeptide: Acetylglutamate kinase (254 aa).

Substrate-binding positions include 40 to 41 (GG), arginine 62, and asparagine 158.

Belongs to the acetylglutamate kinase family. ArgB subfamily.

Its subcellular location is the cytoplasm. It catalyses the reaction N-acetyl-L-glutamate + ATP = N-acetyl-L-glutamyl 5-phosphate + ADP. It functions in the pathway amino-acid biosynthesis; L-arginine biosynthesis; N(2)-acetyl-L-ornithine from L-glutamate: step 2/4. Functionally, catalyzes the ATP-dependent phosphorylation of N-acetyl-L-glutamate. This chain is Acetylglutamate kinase, found in Chloroflexus aggregans (strain MD-66 / DSM 9485).